A 763-amino-acid polypeptide reads, in one-letter code: ATP-dependent RNA helicase glh-1 (763 aa).

A disordered region spans residues 1 to 30; sequence MSDGWSDSESAAKAKTGFGSGGGFGGGNNG. A compositionally biased stretch (gly residues) spans 18-30; that stretch reads FGSGGGFGGGNNG. Repeat copies occupy residues 24-33, 34-43, 44-53, 54-63, 64-73, 74-83, and 84-93. Positions 24 to 93 are 7 X 10 AA tandem repeats, Gly-rich; the sequence is FGGGNNGGSG…FGGGSTGGSP (70 aa). 2 CCHC-type zinc fingers span residues 158–175 and 183–200; these read NNCFNCQQPGHRSSDCPE and RVCYNCQQPGHTSRECTE. The tract at residues 193-230 is disordered; it reads HTSRECTEERKPREGRTGGFGGGAGFGNNGGNDGFGGD. Basic and acidic residues predominate over residues 194 to 208; it reads TSRECTEERKPREGR. A compositionally biased stretch (gly residues) spans 209–230; the sequence is TGGFGGGAGFGNNGGNDGFGGD. 2 consecutive CCHC-type zinc fingers follow at residues 242–259 and 262–279; these read MKCFNCKGEGHRSAECPE and RGCFNCGEQGHRSNECPN. The Q motif motif lies at 341-369; the sequence is KTFAEANLTETMQKNVAHAGYSKTTPIQQ. Residues 372 to 556 form the Helicase ATP-binding domain; it reads LPLVHQGYDI…RAFLRENYVM (185 aa). Position 385–392 (385–392) interacts with ATP; the sequence is AQTGSGKT. Residues 423–427 carry the Phosphodegron motif; it reads ILTPT. The short motif at 499–502 is the DEAD box element; the sequence is DEAD. Residues 592 to 739 form the Helicase C-terminal domain; that stretch reads DIDSYTTEKS…IVPDWMQGAA (148 aa).

Belongs to the DEAD box helicase family. DDX4/VASA subfamily. Interacts with csn-5; this may prevent glh-1 degradation induced by kgb-1. Interacts with zyx-1. Interacts (via the N-terminal region containing the four CCHC zinc fingers) with pan-1. Interacts with kgb-1; this may promote glh-1 degradation by the proteasome. In terms of processing, phosphorylated by kgb-1 (in vitro); this may be responsible for its degradation by the proteasome.

It localises to the cytoplasm. The protein resides in the cytoplasmic granule. It is found in the perinuclear region. The enzyme catalyses ATP + H2O = ADP + phosphate + H(+). In terms of biological role, probable ATP-binding RNA helicase. May act redundantly with the P-granule component glh-4 to regulate the formation of the granular structure of P-granules in embryos. Plays a role in positively regulating the localization of pgl-1 to P-granules. May play a role in transgenerational epigenetic inheritance. May protect somatic cells from excessive apoptosis during normal development. In Caenorhabditis elegans, this protein is ATP-dependent RNA helicase glh-1.